A 585-amino-acid chain; its full sequence is Frizzled-5 (585 aa).

The signal sequence occupies residues 1 to 26 (MARPDPSAPPSLLLLLLAQLVGRAAA). At 27 to 238 (ASKAPVCQEI…ADERTFATFW (212 aa)) the chain is on the extracellular side. Residues 28–150 (SKAPVCQEIT…RDAEVLCMDY (123 aa)) form the FZ domain. Intrachain disulfides connect Cys33–Cys94, Cys41–Cys87, Cys78–Cys116, Cys105–Cys147, and Cys109–Cys133. Asn47 carries an N-linked (GlcNAc...) asparagine glycan. Asn151 carries N-linked (GlcNAc...) asparagine glycosylation. The disordered stretch occupies residues 156–179 (TTAPPRPFPAKPTLPGPPGAPASG). The span at 159 to 175 (PPRPFPAKPTLPGPPGA) shows a compositional bias: pro residues. The helical transmembrane segment at 239 to 259 (IGLWSVLCFISTSTTVATFLI) threads the bilayer. Topologically, residues 260-270 (DMERFRYPERP) are cytoplasmic. The chain crosses the membrane as a helical span at residues 271–291 (IIFLSACYLCVSLGFLVRLVV). At 292 to 315 (GHASVACSREHNHIHYETTGPALC) the chain is on the extracellular side. A helical membrane pass occupies residues 316 to 336 (TIVFLLVYFFGMASSIWWVIL). Topologically, residues 337–358 (SLTWFLAAGMKWGNEAIAGYAQ) are cytoplasmic. The helical transmembrane segment at 359–379 (YFHLAAWLIPSVKSITALALS) threads the bilayer. Residues 380 to 402 (SVDGDPVAGICYVGNQNLNSLRG) are Extracellular-facing. The helical transmembrane segment at 403–423 (FVLGPLVLYLLVGTLFLLAGF) threads the bilayer. At 424–449 (VSLFRIRSVIKQGGTKTDKLEKLMIR) the chain is on the cytoplasmic side. A helical transmembrane segment spans residues 450–470 (IGIFTLLYTVPASIVVACYLY). Topologically, residues 471–500 (EQHYRESWEAALTCACPGHDTGQPRAKPEY) are extracellular. A helical transmembrane segment spans residues 501-521 (WVLMLKYFMCLVVGITSGVWI). Residues 522-585 (WSGKTVESWR…YHKQVSLSHV (64 aa)) are Cytoplasmic-facing. A Lys-Thr-X-X-X-Trp motif, mediates interaction with the PDZ domain of Dvl family members motif is present at residues 525-530 (KTVESW). Residues 583–585 (SHV) carry the PDZ-binding motif.

Belongs to the G-protein coupled receptor Fz/Smo family. In terms of assembly, binding of unsaturated fatty acid molecules (via FZ domain) promotes homodimerization. Interacts with WNT2B. Interacts with WNT3A. Interacts with WNT7A. Interacts with GOPC. Post-translationally, ubiquitinated by RNF43 and ZNRF3, leading to its degradation by the proteasome.

The protein resides in the cell membrane. The protein localises to the golgi apparatus membrane. Its subcellular location is the synapse. It is found in the perikaryon. It localises to the cell projection. The protein resides in the dendrite. The protein localises to the axon. Receptor for Wnt proteins. Functions in the canonical Wnt/beta-catenin signaling pathway. In vitro activates WNT2, WNT10B, WNT5A, but not WNT2B or WNT4 signaling. In neurons, activation by WNT7A promotes formation of synapses. May be involved in transduction and intercellular transmission of polarity information during tissue morphogenesis and/or in differentiated tissues. Plays a role in yolk sac angiogenesis and in placental vascularization. Plays a role in ocular development. The sequence is that of Frizzled-5 (FZD5) from Homo sapiens (Human).